Here is a 233-residue protein sequence, read N- to C-terminus: Defense protein 3 (233 aa).

The first 17 residues, 1 to 17 (MFGKFVLLAVLLVGVNS), serve as a signal peptide directing secretion. The propeptide occupies 18–45 (RYVIIEDPVYYIEDHELPEQWTSSRVRR).

Belongs to the attacin/sarcotoxin-2 family.

The protein localises to the secreted. Functionally, has antibacterial activity against both Gram-positive and Gram-negative bacteria. This is Defense protein 3 from Lonomia obliqua (Moth).